We begin with the raw amino-acid sequence, 334 residues long: Cytoskeleton protein RodZ (334 aa).

Residues 1-111 (MNTEATHDQN…LGKRRKKRDG (111 aa)) are Cytoplasmic-facing. The region spanning 19 to 71 (LRNAREQLGLSQQAVAERLCLKVSTVRDIEEDKAPSDLASTFLRGYIRSYARL) is the HTH cro/C1-type domain. The H-T-H motif DNA-binding region spans 30 to 49 (QQAVAERLCLKVSTVRDIEE). The helical; Signal-anchor for type II membrane protein transmembrane segment at 112 to 132 (WLMSFTWLVLFVVVGLTGAWW) threads the bilayer. Residues 133 to 334 (WQNHKAQQEE…TLNAEPTPAQ (202 aa)) are Periplasmic-facing. Disordered regions lie at residues 155–207 (NADK…ATQN) and 221–241 (ATSAAPAATETPSALPTSQAG). Low complexity predominate over residues 176-207 (TTPAQTAPAPATPVDSTAATQTPAATATATQN).

Belongs to the RodZ family.

It is found in the cell inner membrane. Cytoskeletal protein that is involved in cell-shape control through regulation of the length of the long axis. The chain is Cytoskeleton protein RodZ from Salmonella schwarzengrund (strain CVM19633).